Reading from the N-terminus, the 255-residue chain is tRNA (guanine-N(1)-)-methyltransferase (255 aa).

Residues Gly113 and 133–138 each bind S-adenosyl-L-methionine; that span reads IGDYVL.

Belongs to the RNA methyltransferase TrmD family. Homodimer.

It localises to the cytoplasm. The enzyme catalyses guanosine(37) in tRNA + S-adenosyl-L-methionine = N(1)-methylguanosine(37) in tRNA + S-adenosyl-L-homocysteine + H(+). In terms of biological role, specifically methylates guanosine-37 in various tRNAs. This chain is tRNA (guanine-N(1)-)-methyltransferase, found in Chloroflexus aggregans (strain MD-66 / DSM 9485).